The sequence spans 235 residues: Thaumatin II (235 aa).

The N-terminal stretch at 1–22 (MAATTCFFFLFPFLLLLTLSRA) is a signal peptide. Cystine bridges form between Cys-31/Cys-226, Cys-78/Cys-88, Cys-93/Cys-99, Cys-143/Cys-215, Cys-148/Cys-199, Cys-156/Cys-167, Cys-171/Cys-180, and Cys-181/Cys-186. The propeptide at 230–235 (LELEDE) is removed in mature form.

Belongs to the thaumatin family.

The protein localises to the cytoplasmic vesicle. Its function is as follows. Taste-modifying protein; intensely sweet-tasting. It is 100000 times sweeter than sucrose on a molar basis. This is Thaumatin II from Thaumatococcus daniellii (Katemfe).